The primary structure comprises 76 residues: Potassium/proton antiporter CemA (76 aa).

The chain crosses the membrane as a helical span at residues 35-52; that stretch reads QILSCLVSIFPVILDTIF.

The protein belongs to the CemA family.

The protein localises to the plastid. It is found in the chloroplast inner membrane. It catalyses the reaction K(+)(in) + H(+)(out) = K(+)(out) + H(+)(in). Its function is as follows. Contributes to K(+)/H(+) antiport activity by supporting proton efflux to control proton extrusion and homeostasis in chloroplasts in a light-dependent manner to modulate photosynthesis. Prevents excessive induction of non-photochemical quenching (NPQ) under continuous-light conditions. Indirectly promotes efficient inorganic carbon uptake into chloroplasts. The sequence is that of Potassium/proton antiporter CemA from Vicia faba (Broad bean).